The sequence spans 260 residues: MRLALGVSYNGQAYQGWQSQLSRQTVQDQLEMALSKLASHRVSTLCAGRTDAGVHGLMQVIHFDTPLDRAPNSWVRGTNALLPRDIAVEWARPVPPEFHCRASALSRRYAYILLESPVRPSIDAGQVGWTFKPLEQVAMQQAASHLLGEHDFSSFRASACQALSPVKMLQRLDISRHGACWRFEFEANAFLHHMIRNIMGCLITVGQGKKPPEWLKEVLLARNRNVAAPTFSAHGLYFLGPRYAPHWGLPDRTPAFDRLP.

Asp51 functions as the Nucleophile in the catalytic mechanism. Position 109 (Tyr109) interacts with substrate.

Belongs to the tRNA pseudouridine synthase TruA family. As to quaternary structure, homodimer.

It catalyses the reaction uridine(38/39/40) in tRNA = pseudouridine(38/39/40) in tRNA. Functionally, formation of pseudouridine at positions 38, 39 and 40 in the anticodon stem and loop of transfer RNAs. The polypeptide is tRNA pseudouridine synthase A (Albidiferax ferrireducens (strain ATCC BAA-621 / DSM 15236 / T118) (Rhodoferax ferrireducens)).